The sequence spans 263 residues: Killer cell lectin-like receptor 4 (263 aa).

Residues 1 to 44 (MTEQEDTFSAVRFHKSSGLQNEMRLKETRKPEKARLRVCSVPWQ) are Cytoplasmic-facing. The chain crosses the membrane as a helical; Signal-anchor for type II membrane protein span at residues 45–65 (LIVIALGILISLRLVTVAVLM). Residues 66–263 (TNIFQYGQQK…CGKRLDKFPH (198 aa)) are Extracellular-facing. N-linked (GlcNAc...) asparagine glycosylation is found at asparagine 87 and asparagine 104. The C-type lectin domain maps to 139 to 258 (GVKVYWFCYG…SFICICGKRL (120 aa)). Disulfide bonds link cysteine 146–cysteine 151, cysteine 164–cysteine 252, cysteine 168–cysteine 254, and cysteine 233–cysteine 246. 2 N-linked (GlcNAc...) asparagine glycosylation sites follow: asparagine 170 and asparagine 222.

Homodimer; disulfide-linked. Interacts with the adapter protein TYROBP/DAP12; the interaction leads to natural killer cell activation.

It is found in the cell membrane. Its function is as follows. Receptor on natural killer (NK) cells for class I MHC. The protein is Killer cell lectin-like receptor 4 (Klra4) of Mus musculus (Mouse).